A 93-amino-acid chain; its full sequence is Protein FptB (93 aa).

Positions 1-25 (MPRQSGFGWAWRVPLALAGSLAAAT) are cleaved as a signal peptide. 2 helical membrane passes run 44–64 (LYAGLFGALGVGLLLLVGGLL) and 71–91 (FAWRLGGSLLVLGLALWLLAG).

The protein resides in the cell membrane. Its function is as follows. May play some role in transport of Fe(3+)-pyochelin. The chain is Protein FptB (fptB) from Pseudomonas aeruginosa (strain ATCC 15692 / DSM 22644 / CIP 104116 / JCM 14847 / LMG 12228 / 1C / PRS 101 / PAO1).